The following is a 348-amino-acid chain: GMP reductase (348 aa).

Alanine 108–alanine 131 lines the NADP(+) pocket. K(+)-binding residues include glycine 181 and glycine 183. Cysteine 186 functions as the Thioimidate intermediate in the catalytic mechanism. Isoleucine 216–valine 239 is an NADP(+) binding site.

Belongs to the IMPDH/GMPR family. GuaC type 1 subfamily. As to quaternary structure, homotetramer.

It carries out the reaction IMP + NH4(+) + NADP(+) = GMP + NADPH + 2 H(+). Its function is as follows. Catalyzes the irreversible NADPH-dependent deamination of GMP to IMP. It functions in the conversion of nucleobase, nucleoside and nucleotide derivatives of G to A nucleotides, and in maintaining the intracellular balance of A and G nucleotides. In Vibrio parahaemolyticus serotype O3:K6 (strain RIMD 2210633), this protein is GMP reductase.